Reading from the N-terminus, the 1235-residue chain is ATP-dependent helicase/nuclease subunit A (1235 aa).

A UvrD-like helicase ATP-binding domain is found at 4-470; sequence REYTLSQKQA…IILAENFRSM (467 aa). 25–32 is a binding site for ATP; sequence ASAGSGKT. In terms of domain architecture, UvrD-like helicase C-terminal spans 501–795; that stretch reads QFGAKYYPDE…KLMTIHGSKG (295 aa).

Belongs to the helicase family. AddA subfamily. As to quaternary structure, heterodimer of AddA and AddB/RexB. The cofactor is Mg(2+).

It catalyses the reaction Couples ATP hydrolysis with the unwinding of duplex DNA by translocating in the 3'-5' direction.. The enzyme catalyses ATP + H2O = ADP + phosphate + H(+). Functionally, the heterodimer acts as both an ATP-dependent DNA helicase and an ATP-dependent, dual-direction single-stranded exonuclease. Recognizes the chi site generating a DNA molecule suitable for the initiation of homologous recombination. The AddA nuclease domain is required for chi fragment generation; this subunit has the helicase and 3' -&gt; 5' nuclease activities. This chain is ATP-dependent helicase/nuclease subunit A, found in Pediococcus pentosaceus (strain ATCC 25745 / CCUG 21536 / LMG 10740 / 183-1w).